The primary structure comprises 183 residues: Dual-action ribosomal maturation protein DarP (183 aa).

Belongs to the DarP family.

It localises to the cytoplasm. Functionally, member of a network of 50S ribosomal subunit biogenesis factors which assembles along the 30S-50S interface, preventing incorrect 23S rRNA structures from forming. Promotes peptidyl transferase center (PTC) maturation. This chain is Dual-action ribosomal maturation protein DarP, found in Shigella flexneri serotype 5b (strain 8401).